Consider the following 549-residue polypeptide: CTP synthase (549 aa).

Positions 1–270 are amidoligase domain; the sequence is MTKFVFVTGG…DRLICEELRL (270 aa). CTP is bound at residue Ser13. Ser13 lines the UTP pocket. ATP contacts are provided by residues 14–19 and Asp71; that span reads SLGKGI. 2 residues coordinate Mg(2+): Asp71 and Glu144. CTP is bound by residues 151 to 153, 191 to 196, and Lys227; these read DIE and KTKPTQ. UTP-binding positions include 191 to 196 and Lys227; that span reads KTKPTQ. The 253-residue stretch at 295–547 folds into the Glutamine amidotransferase type-1 domain; that stretch reads TIGMVGKYVD…VEAALAAQRQ (253 aa). Gly356 serves as a coordination point for L-glutamine. The Nucleophile; for glutamine hydrolysis role is filled by Cys383. L-glutamine contacts are provided by residues 384–387, Glu407, and Arg473; that span reads LGMQ. Active-site residues include His520 and Glu522.

This sequence belongs to the CTP synthase family. In terms of assembly, homotetramer.

The catalysed reaction is UTP + L-glutamine + ATP + H2O = CTP + L-glutamate + ADP + phosphate + 2 H(+). It carries out the reaction L-glutamine + H2O = L-glutamate + NH4(+). The enzyme catalyses UTP + NH4(+) + ATP = CTP + ADP + phosphate + 2 H(+). It functions in the pathway pyrimidine metabolism; CTP biosynthesis via de novo pathway; CTP from UDP: step 2/2. Allosterically activated by GTP, when glutamine is the substrate; GTP has no effect on the reaction when ammonia is the substrate. The allosteric effector GTP functions by stabilizing the protein conformation that binds the tetrahedral intermediate(s) formed during glutamine hydrolysis. Inhibited by the product CTP, via allosteric rather than competitive inhibition. Functionally, catalyzes the ATP-dependent amination of UTP to CTP with either L-glutamine or ammonia as the source of nitrogen. Regulates intracellular CTP levels through interactions with the four ribonucleotide triphosphates. This chain is CTP synthase, found in Cupriavidus metallidurans (strain ATCC 43123 / DSM 2839 / NBRC 102507 / CH34) (Ralstonia metallidurans).